The chain runs to 363 residues: MSAIYNFCAGPAMLPAAVMKKAQQELLDWNGLGVSVMEVSHRGKEFIALTKQAEADLRELMHIPQNYHVLFMHGGGRGQFSAVVNNFLGNQGRALYLVSGQWSSAALAEAQKLAGDTQIDSLNIVEKHNGLNAVVLPDLHKIDADYRYVHYCPNETVDGIEIFDELDSPWPIVADLSSTIMSREIDVSRYGLIYAGAQKNIGPSGLSIVIVRDDMLKLPSLTQSSIMDYRLAVEHDSMFNTPPTFAWYLAAEVFAWLKSLGGVASIAKINQQKAQMLYACIDANPFYKNGVVAANRSQMNVTFQLADESLDGAFLKEAEAAGLVALKGHRIVGGMRASLYNAMPLEGVAALVSFMNEFAAKHS.

R42 contacts L-glutamate. Residues 76–77 (GR), W102, T156, D175, and Q198 each bind pyridoxal 5'-phosphate. The residue at position 199 (K199) is an N6-(pyridoxal phosphate)lysine. 240–241 (NT) is a binding site for pyridoxal 5'-phosphate.

The protein belongs to the class-V pyridoxal-phosphate-dependent aminotransferase family. SerC subfamily. In terms of assembly, homodimer. Pyridoxal 5'-phosphate serves as cofactor.

The protein localises to the cytoplasm. The enzyme catalyses O-phospho-L-serine + 2-oxoglutarate = 3-phosphooxypyruvate + L-glutamate. It carries out the reaction 4-(phosphooxy)-L-threonine + 2-oxoglutarate = (R)-3-hydroxy-2-oxo-4-phosphooxybutanoate + L-glutamate. The protein operates within amino-acid biosynthesis; L-serine biosynthesis; L-serine from 3-phospho-D-glycerate: step 2/3. Its pathway is cofactor biosynthesis; pyridoxine 5'-phosphate biosynthesis; pyridoxine 5'-phosphate from D-erythrose 4-phosphate: step 3/5. In terms of biological role, catalyzes the reversible conversion of 3-phosphohydroxypyruvate to phosphoserine and of 3-hydroxy-2-oxo-4-phosphonooxybutanoate to phosphohydroxythreonine. This is Phosphoserine aminotransferase from Shewanella sp. (strain MR-4).